Here is a 230-residue protein sequence, read N- to C-terminus: Ion-translocating oxidoreductase complex subunit E (230 aa).

6 helical membrane passes run alanine 18 to alanine 38, leucine 39 to leucine 59, threonine 63 to valine 83, leucine 86 to valine 106, alanine 128 to methionine 148, and proline 182 to glycine 202.

This sequence belongs to the NqrDE/RnfAE family. In terms of assembly, the complex is composed of six subunits: RsxA, RsxB, RsxC, RsxD, RsxE and RsxG.

The protein resides in the cell inner membrane. In terms of biological role, part of a membrane-bound complex that couples electron transfer with translocation of ions across the membrane. Required to maintain the reduced state of SoxR. The sequence is that of Ion-translocating oxidoreductase complex subunit E from Escherichia fergusonii (strain ATCC 35469 / DSM 13698 / CCUG 18766 / IAM 14443 / JCM 21226 / LMG 7866 / NBRC 102419 / NCTC 12128 / CDC 0568-73).